We begin with the raw amino-acid sequence, 221 residues long: Pre-rRNA-processing protein SRD1 (221 aa).

Residues 101-110 show a composition bias toward polar residues; the sequence is SKNRVTSACN. 2 disordered regions span residues 101–121 and 137–161; these read SKNR…QEAN and ASIT…TILP. Positions 142-155 are enriched in basic residues; that stretch reads KYSKKTTSRPKREK. The GATA-type zinc-finger motif lies at 168–193; the sequence is CSKCKDTWTIQWRSGPDQNRELCSPC. Residues 201–221 form a disordered region; that stretch reads LKKENEKKRQAADKRIDRNNP. A compositionally biased stretch (basic and acidic residues) spans 203 to 221; that stretch reads KENEKKRQAADKRIDRNNP.

It is found in the cytoplasm. It localises to the nucleus. Plays a direct or indirect role in pre-rRNA processing. This is Pre-rRNA-processing protein SRD1 (SRD1) from Saccharomyces cerevisiae (strain ATCC 204508 / S288c) (Baker's yeast).